A 122-amino-acid polypeptide reads, in one-letter code: Large ribosomal subunit protein uL14 (122 aa).

It belongs to the universal ribosomal protein uL14 family. In terms of assembly, part of the 50S ribosomal subunit. Forms a cluster with proteins L3 and L19. In the 70S ribosome, L14 and L19 interact and together make contacts with the 16S rRNA in bridges B5 and B8.

Functionally, binds to 23S rRNA. Forms part of two intersubunit bridges in the 70S ribosome. In Aliarcobacter butzleri (strain RM4018) (Arcobacter butzleri), this protein is Large ribosomal subunit protein uL14.